A 619-amino-acid polypeptide reads, in one-letter code: Probable serine/threonine-protein kinase WNK8 (619 aa).

The span at 1 to 14 (MSGARRCGDRRSER) shows a compositional bias: basic and acidic residues. Residues 1-30 (MSGARRCGDRRSERSSVVGDNRNGYVETDP) form a disordered region. The Protein kinase domain maps to 35-291 (GRLSEVLGKG…AEELLLDPFL (257 aa)). ATP contacts are provided by residues 115–118 (TELF) and lysine 163. Aspartate 180 (proton acceptor) is an active-site residue. Disordered stretches follow at residues 293–335 (PPQN…AKTT), 419–464 (YADD…PGPH), 508–555 (CSAS…SMVD), and 585–619 (GFRD…HYMF). Residues 419-428 (YADDDDDDDV) show a composition bias toward acidic residues. Over residues 439-448 (SSSPTSSQGS) the composition is skewed to low complexity. The segment covering 602–619 (QHRRRSSSKVDHKHHYMF) has biased composition (basic residues).

The protein belongs to the protein kinase superfamily. Ser/Thr protein kinase family. WNK subfamily.

The catalysed reaction is L-seryl-[protein] + ATP = O-phospho-L-seryl-[protein] + ADP + H(+). The enzyme catalyses L-threonyl-[protein] + ATP = O-phospho-L-threonyl-[protein] + ADP + H(+). This chain is Probable serine/threonine-protein kinase WNK8 (WNK8), found in Oryza sativa subsp. japonica (Rice).